Here is a 414-residue protein sequence, read N- to C-terminus: Serine/threonine transporter SstT (414 aa).

Helical transmembrane passes span 16–36, 46–66, 84–104, 143–163, 180–200, 219–239, 300–320, and 332–352; these read GSLV…AWIS, LGTL…LMLV, ILFL…VFSF, ALLN…GFAL, AVTF…FGLV, LVVL…LLVF, MAGA…TLGV, and VVAS…LLLI.

This sequence belongs to the dicarboxylate/amino acid:cation symporter (DAACS) (TC 2.A.23) family.

The protein localises to the cell inner membrane. The catalysed reaction is L-serine(in) + Na(+)(in) = L-serine(out) + Na(+)(out). It catalyses the reaction L-threonine(in) + Na(+)(in) = L-threonine(out) + Na(+)(out). Functionally, involved in the import of serine and threonine into the cell, with the concomitant import of sodium (symport system). The sequence is that of Serine/threonine transporter SstT from Salmonella agona (strain SL483).